Consider the following 266-residue polypeptide: 4-diphosphocytidyl-2-C-methyl-D-erythritol kinase (266 aa).

Residue lysine 11 is part of the active site. 103–113 (PTFAGLGGGSS) is an ATP binding site. Aspartate 145 is a catalytic residue.

It belongs to the GHMP kinase family. IspE subfamily.

It catalyses the reaction 4-CDP-2-C-methyl-D-erythritol + ATP = 4-CDP-2-C-methyl-D-erythritol 2-phosphate + ADP + H(+). The protein operates within isoprenoid biosynthesis; isopentenyl diphosphate biosynthesis via DXP pathway; isopentenyl diphosphate from 1-deoxy-D-xylulose 5-phosphate: step 3/6. Functionally, catalyzes the phosphorylation of the position 2 hydroxy group of 4-diphosphocytidyl-2C-methyl-D-erythritol. The protein is 4-diphosphocytidyl-2-C-methyl-D-erythritol kinase of Sulfurimonas denitrificans (strain ATCC 33889 / DSM 1251) (Thiomicrospira denitrificans (strain ATCC 33889 / DSM 1251)).